Consider the following 608-residue polypeptide: Chaperone protein DnaK (608 aa).

At threonine 175 the chain carries Phosphothreonine; by autocatalysis.

This sequence belongs to the heat shock protein 70 family.

Functionally, acts as a chaperone. The polypeptide is Chaperone protein DnaK (Finegoldia magna (strain ATCC 29328 / DSM 20472 / WAL 2508) (Peptostreptococcus magnus)).